The chain runs to 201 residues: UPF0301 protein CE2927 (201 aa).

The protein belongs to the UPF0301 (AlgH) family.

The polypeptide is UPF0301 protein CE2927 (Corynebacterium efficiens (strain DSM 44549 / YS-314 / AJ 12310 / JCM 11189 / NBRC 100395)).